Consider the following 266-residue polypeptide: Translation initiation factor 2 subunit alpha (266 aa).

An S1 motif domain is found at G12 to K83.

Belongs to the eIF-2-alpha family. In terms of assembly, heterotrimer composed of an alpha, a beta and a gamma chain.

Its function is as follows. eIF-2 functions in the early steps of protein synthesis by forming a ternary complex with GTP and initiator tRNA. In Saccharolobus islandicus (strain L.S.2.15 / Lassen #1) (Sulfolobus islandicus), this protein is Translation initiation factor 2 subunit alpha.